An 86-amino-acid polypeptide reads, in one-letter code: Muscarinic toxin 7 (86 aa).

The first 21 residues, 1–21, serve as a signal peptide directing secretion; it reads MKTLLLTLVVVTIVCLDLGYT. Finger loop stretches follow at residues 23–37, 44–63, and 66–78; these read TCVKSNSIWFPTSED, LCFKRWQYISPRMYDFTRGC, and TCPKAEYRDVINC. 4 disulfide bridges follow: cysteine 24–cysteine 45, cysteine 38–cysteine 63, cysteine 67–cysteine 78, and cysteine 79–cysteine 84.

Belongs to the three-finger toxin family. Short-chain subfamily. Aminergic toxin sub-subfamily. Expressed by the venom gland.

The protein localises to the secreted. Its function is as follows. Binds specifically and irreversibly to an allosteric site of the muscarinic acetylcholine M1 receptor (CHRM1) at subnanomolar concentrations and shows a very slow dissociation rate. It also inhibits agonist-mediated guanosine 5'-O-(3'-thiotriphosphate) (GTP-g-S) binding and downstream signaling, and decreases the dissociation rate of orthosteric antagonists (N-methylscopolamine (NMS) or pirenzepine). Is a potent negative allosteric modulator (NAM) for CHRM1 activation and a positive allosteric modulator (PAM) for antagonist binding. This Dendroaspis angusticeps (Eastern green mamba) protein is Muscarinic toxin 7.